We begin with the raw amino-acid sequence, 227 residues long: Cell wall mannoprotein CIS3 (227 aa).

The first 21 residues, 1-21 (MQFKNVALAASVAALSATASA), serve as a signal peptide directing secretion. Positions 22–64 (EGYTPGEPWSTLTPTGSISCGAAEYTTTFGIAVQAITSSKAKR) are excised as a propeptide. Residues 65-78 (DVISQIGDGQVQAT) form a PIR1/2/3 repeat. An O-linked (Man) serine glycan is attached at serine 68. Threonine 78 carries O-linked (Man) threonine glycosylation. A compositionally biased stretch (low complexity) spans 83–124 (AQATDSQAQATTTATPTSSEKISSSASKTSTNATSSSCATPS). A disordered region spans residues 83 to 127 (AQATDSQAQATTTATPTSSEKISSSASKTSTNATSSSCATPSLKD). Serine 105, serine 106, serine 107, and serine 109 each carry an O-linked (Man) serine glycan. An O-linked (Man) threonine glycan is attached at threonine 111. Serine 112 carries an O-linked (Man) serine glycan. A glycan (O-linked (Man) threonine) is linked at threonine 113. The N-linked (GlcNAc...) asparagine glycan is linked to asparagine 114. An O-linked (Man) threonine glycan is attached at threonine 116. O-linked (Man) serine glycans are attached at residues serine 117 and serine 118.

The protein belongs to the PIR protein family. Post-translationally, covalently linked to beta-1,3-glucan of the inner cell wall layer via an alkali-sensitive ester linkage between the gamma-carboxyl group of glutamic acid, arising from Gln-74 within the PIR1/2/3 repeat, and hydroxyl groups of glucoses of beta-1,3-glucan chains. In terms of processing, extensively O-mannosylated. Also N-glycosylated.

Its subcellular location is the secreted. The protein localises to the cell wall. Its function is as follows. Component of the outer cell wall layer. Required for stability of the cell wall and for optimal growth. Required for resistance against several antifungal and cell wall-perturbing agents. The protein is Cell wall mannoprotein CIS3 (CIS3) of Saccharomyces cerevisiae (strain ATCC 204508 / S288c) (Baker's yeast).